Here is a 185-residue protein sequence, read N- to C-terminus: Probable NEDD8-conjugating enzyme Ubc12-like (185 aa).

The tract at residues 8-29 is disordered; the sequence is KEKQREESQSNNGRGASTVKKQ. Positions 16-28 are enriched in polar residues; sequence QSNNGRGASTVKK. The UBC core domain occupies 31–176; sequence AGELRLHKDI…VRRAMMGGQV (146 aa). Catalysis depends on Cys-114, which acts as the Glycyl thioester intermediate.

This sequence belongs to the ubiquitin-conjugating enzyme family. UBC12 subfamily.

It functions in the pathway protein modification; protein neddylation. Its function is as follows. Accepts the ubiquitin-like protein NEDD8/RUB1 from the ECR1-AXR1 E1 complex and catalyzes its covalent attachment to other proteins. This chain is Probable NEDD8-conjugating enzyme Ubc12-like (RCE2), found in Arabidopsis thaliana (Mouse-ear cress).